A 688-amino-acid chain; its full sequence is Elongation factor G (688 aa).

A tr-type G domain is found at 8 to 282 (EKTRNIGIIA…AVVDYLPAPC (275 aa)). GTP is bound by residues 17-24 (AHIDAGKT), 81-85 (DTPGH), and 135-138 (NKMD).

It belongs to the TRAFAC class translation factor GTPase superfamily. Classic translation factor GTPase family. EF-G/EF-2 subfamily.

It is found in the cytoplasm. Catalyzes the GTP-dependent ribosomal translocation step during translation elongation. During this step, the ribosome changes from the pre-translocational (PRE) to the post-translocational (POST) state as the newly formed A-site-bound peptidyl-tRNA and P-site-bound deacylated tRNA move to the P and E sites, respectively. Catalyzes the coordinated movement of the two tRNA molecules, the mRNA and conformational changes in the ribosome. This Aster yellows witches'-broom phytoplasma (strain AYWB) protein is Elongation factor G.